Consider the following 217-residue polypeptide: uncharacterized protein (217 aa).

Disordered stretches follow at residues 1 to 85 (MGVK…RGNT) and 167 to 189 (KLRS…EPDE). The span at 38–48 (AKSDKDKRKGS) shows a compositional bias: basic and acidic residues. Residues 60-78 (NALPTKNLTTPPALNPLTT) are compositionally biased toward low complexity. Residues 172 to 189 (PHKDQHNSATNKDQEPDE) are compositionally biased toward basic and acidic residues.

This is an uncharacterized protein from Saccharomyces cerevisiae (strain ATCC 204508 / S288c) (Baker's yeast).